Reading from the N-terminus, the 508-residue chain is MQRLLTPVKRILQLTRAVQETSLTPARLLPVAHQRFSTASAVPLAKTDTWPKDVGILALEVYFPAQYVDQTDLEKYNNVEAGKYTVGLGQTRMGFCSVQEDINSLCLTVVQRLMERIQLPWDSVGRLEVGTETIIDKSKAVKTVLMELFQDSGNTDIEGIDTTNACYGGTASLFNAANWMESSSWDGRYAMVVCGDIAVYPSGNARPTGGAGAVAMLIGPKAPLALERGLRGTHMENVYDFYKPNLASEYPIVDGKLSIQCYLRALDRCYTSYRKKIQNQWKQAGSDRPFTLDDLQYMIFHTPFCKMVQKSLARLMFNDFLSASSDTQTSLYKGLEAFGGLKLEDTYTNKDLDKALLKASQDMFDKKTKASLYLSTHNGNMYTSSLYGCLASLLSHHSAQELAGSRIGAFSYGSGLAASFFSFRVSQDAAPGSPLDKLVSSTSDLPKRLASRKCVSPEEFTEIMNQREQFYHKVNFSPPGDTNSLFPGTWYLERVDEQHRRKYARRPV.

The transit peptide at 1-37 directs the protein to the mitochondrion; the sequence is MQRLLTPVKRILQLTRAVQETSLTPARLLPVAHQRFS. N6-succinyllysine is present on Lys-52. The (3S)-3-hydroxy-3-methylglutaryl-CoA site is built by Glu-80 and Ala-81. Residue Lys-83 is modified to N6-acetyllysine; alternate. Lys-83 carries the post-translational modification N6-succinyllysine; alternate. Catalysis depends on Glu-132, which acts as the Proton donor/acceptor. The (3S)-3-hydroxy-3-methylglutaryl-CoA site is built by Cys-166, Asn-204, and Thr-208. Cys-166 acts as the Acyl-thioester intermediate in catalysis. An N6-succinyllysine modification is found at Lys-221. N6-acetyllysine is present on Lys-243. An N6-acetyllysine; alternate modification is found at Lys-256. Lys-256 carries the post-translational modification N6-succinyllysine; alternate. 2 residues coordinate (3S)-3-hydroxy-3-methylglutaryl-CoA: Ser-258 and His-301. His-301 serves as the catalytic Proton donor/acceptor. Lys-306 bears the N6-acetyllysine mark. (3S)-3-hydroxy-3-methylglutaryl-CoA is bound at residue Lys-310. N6-acetyllysine; alternate is present on Lys-310. An N6-succinyllysine; alternate modification is found at Lys-310. An N6-succinyllysine modification is found at Lys-333. An N6-acetyllysine; alternate mark is found at Lys-342, Lys-350, Lys-354, and Lys-358. An N6-succinyllysine; alternate mark is found at Lys-342, Lys-350, Lys-354, and Lys-358. (3S)-3-hydroxy-3-methylglutaryl-CoA contacts are provided by Asn-380 and Ser-414. A Phosphoserine modification is found at Ser-433. Lys-437 is modified (N6-acetyllysine). Position 440 is a phosphoserine (Ser-440). Lys-447 is subject to N6-acetyllysine; alternate. The residue at position 447 (Lys-447) is an N6-succinyllysine; alternate. The residue at position 456 (Ser-456) is a Phosphoserine. Lys-473 is modified (N6-acetyllysine; alternate). Lys-473 carries the N6-succinyllysine; alternate modification. At Ser-477 the chain carries Phosphoserine.

It belongs to the thiolase-like superfamily. HMG-CoA synthase family. As to quaternary structure, homodimer. In terms of processing, succinylated. Desuccinylated by SIRT5. Succinylation, at least at Lys-83 and Lys-310, inhibits the enzymatic activity. As to expression, expression in liver is 200-fold higher than in any other tissue. Low expression in colon, kidney, testis, and pancreas. Very low expression in heart and skeletal muscle. Not detected in brain. In terms of tissue distribution, highest expression detected in heart and skeletal muscle.

It localises to the mitochondrion. It carries out the reaction acetoacetyl-CoA + acetyl-CoA + H2O = (3S)-3-hydroxy-3-methylglutaryl-CoA + CoA + H(+). Its pathway is metabolic intermediate biosynthesis; (R)-mevalonate biosynthesis; (R)-mevalonate from acetyl-CoA: step 2/3. In terms of biological role, catalyzes the first irreversible step in ketogenesis, condensing acetyl-CoA to acetoacetyl-CoA to form HMG-CoA, which is converted by HMG-CoA reductase (HMGCR) into mevalonate. The polypeptide is Hydroxymethylglutaryl-CoA synthase, mitochondrial (HMGCS2) (Homo sapiens (Human)).